The primary structure comprises 206 residues: Small ribosomal subunit protein uS4 (206 aa).

The region spanning 96-156 (GRLDNVVYRM…EKAKKQSRVK (61 aa)) is the S4 RNA-binding domain.

This sequence belongs to the universal ribosomal protein uS4 family. Part of the 30S ribosomal subunit. Contacts protein S5. The interaction surface between S4 and S5 is involved in control of translational fidelity.

Functionally, one of the primary rRNA binding proteins, it binds directly to 16S rRNA where it nucleates assembly of the body of the 30S subunit. With S5 and S12 plays an important role in translational accuracy. The sequence is that of Small ribosomal subunit protein uS4 from Enterobacter sp. (strain 638).